Here is a 554-residue protein sequence, read N- to C-terminus: Putative mediator of RNA polymerase II transcription subunit 29 (554 aa).

Disordered stretches follow at residues 118–301 (DNKA…NTEA), 330–381 (QQQQ…PLPQ), 398–428 (LENQ…LQLQ), and 483–524 (NTNL…DDNT). Residues 122 to 210 (NTNNNNNNNN…NNSINNNSNN (89 aa)) are compositionally biased toward low complexity. Positions 167 to 194 (NNNNNNNYNNNNNNNNNNNNNNNNNNNN) form a coiled coil. Polar residues predominate over residues 211 to 225 (KVGSNDNPSTAPITE). Positions 226–264 (NNTENNAGNTNNTNNNNNNNNNNNNNNNNNNNNNNNNTN) are enriched in low complexity. Positions 265–300 (QVAESSNISSNTTPPETTNIVNDPNSVSGGNLTNTE) are enriched in polar residues. Low complexity-rich tracts occupy residues 330–374 (QQQQ…QQPQ), 419–428 (QQQQEQLQLQ), and 483–517 (NTNL…PEIN). Positions 419–486 (QQQQEQLQLQ…SLENQINTNL (68 aa)) form a coiled coil.

This sequence belongs to the Mediator complex subunit 29 family. Component of the Mediator complex.

It is found in the nucleus. In terms of biological role, component of the Mediator complex, a coactivator involved in the regulated transcription of nearly all RNA polymerase II-dependent genes. Mediator functions as a bridge to convey information from gene-specific regulatory proteins to the basal RNA polymerase II transcription machinery. Mediator is recruited to promoters by direct interactions with regulatory proteins and serves as a scaffold for the assembly of a functional preinitiation complex with RNA polymerase II and the general transcription factors. The protein is Putative mediator of RNA polymerase II transcription subunit 29 (med29) of Dictyostelium discoideum (Social amoeba).